Reading from the N-terminus, the 276-residue chain is Prohibitin 1 (276 aa).

Belongs to the prohibitin family.

Functionally, required for larval metabolism or for the progression of the larva into a pupa. This is Prohibitin 1 from Drosophila melanogaster (Fruit fly).